Reading from the N-terminus, the 267-residue chain is Aliphatic sulfonates import ATP-binding protein SsuB 1 (267 aa).

The ABC transporter domain maps to 35–249; that stretch reads VRVRGLRRVF…RRADPAFDRL (215 aa). ATP is bound at residue 67 to 74; that stretch reads GRSGSGKS.

Belongs to the ABC transporter superfamily. Aliphatic sulfonates importer (TC 3.A.1.17.2) family. In terms of assembly, the complex is composed of two ATP-binding proteins (SsuB), two transmembrane proteins (SsuC) and a solute-binding protein (SsuA).

It is found in the cell membrane. It carries out the reaction ATP + H2O + aliphatic sulfonate-[sulfonate-binding protein]Side 1 = ADP + phosphate + aliphatic sulfonateSide 2 + [sulfonate-binding protein]Side 1.. Its function is as follows. Part of the ABC transporter complex SsuABC involved in aliphatic sulfonates import. Responsible for energy coupling to the transport system. The chain is Aliphatic sulfonates import ATP-binding protein SsuB 1 from Frankia alni (strain DSM 45986 / CECT 9034 / ACN14a).